The primary structure comprises 162 residues: MIKAVCPGSFDPVTLGHLDIIERAARTFDEVVVAVLTNPRKEPLFTVEERLEMLREATKHIPNVSVAAADGLLVDFARQQGCRVIVKGLRPIQDFEYEWQMGAVNRQLDGNIETCFLMSRIEYAHLSSSIVRELAYFGRPTEGLVPPFTARRLREKFAKTQP.

Residue S9 coordinates substrate. ATP is bound by residues 9 to 10 and H17; that span reads SF. Positions 41, 73, and 87 each coordinate substrate. ATP-binding positions include 88 to 90, E98, and 123 to 129; these read GLR and YAHLSSS.

This sequence belongs to the bacterial CoaD family. In terms of assembly, homohexamer. It depends on Mg(2+) as a cofactor.

The protein localises to the cytoplasm. The catalysed reaction is (R)-4'-phosphopantetheine + ATP + H(+) = 3'-dephospho-CoA + diphosphate. Its pathway is cofactor biosynthesis; coenzyme A biosynthesis; CoA from (R)-pantothenate: step 4/5. Reversibly transfers an adenylyl group from ATP to 4'-phosphopantetheine, yielding dephospho-CoA (dPCoA) and pyrophosphate. In Symbiobacterium thermophilum (strain DSM 24528 / JCM 14929 / IAM 14863 / T), this protein is Phosphopantetheine adenylyltransferase.